Here is a 420-residue protein sequence, read N- to C-terminus: Odorant receptor 63a (420 aa).

Topologically, residues 1–43 (MYSPEEAAELKRRNYRSIREMIRLSYTVGFNLLDPSRCGQVLR) are cytoplasmic. A helical membrane pass occupies residues 44–64 (IWTIVLSVSSLASLYGHWQML). At 65–76 (ARYIHDIPRIGE) the chain is on the extracellular side. A helical transmembrane segment spans residues 77–97 (TAGTALQFLTSIAKMWYFLFA). Over 98–150 (HRQIYELLRKARCHELLQKCELFERMSDLPVIKEIRQQVESTMNRYWASTRRQ) the chain is Cytoplasmic. Residues 151 to 171 (ILIYLYSCICITTNYFINSFV) traverse the membrane as a helical segment. The Extracellular segment spans residues 172 to 217 (INLYRYFTKPKGSYDIMLPLPSLYPAWEHKGLEFPYYHIQMYLETC). A helical membrane pass occupies residues 218 to 238 (SLYICGMCAVSFDGVFIVLCL). The Cytoplasmic segment spans residues 239-296 (HSVGLMRSLNQMVEQATSELVPPDRRVEYLRCCIYQYQRVANFATEVNNCFRHITFTQ). The helical transmembrane segment at 297 to 317 (FLLSLFNWGLALFQMSVGLGN) threads the bilayer. The N-linked (GlcNAc...) asparagine glycan is linked to Asn318. Residues 318-320 (NSS) are Extracellular-facing. The chain crosses the membrane as a helical span at residues 321-341 (ITMIRMTMYLVAAGYQIVVYC). The Cytoplasmic segment spans residues 342–387 (YNGQRFATASEEIANAFYQVRWYGESREFRHLIRMMLMRTNRGFRL). A helical membrane pass occupies residues 388-408 (DVSWFMQMSLPTLMAMVRTSG). Residues 409–420 (QYFLLLQNVNQK) are Extracellular-facing.

This sequence belongs to the insect chemoreceptor superfamily. Heteromeric odorant receptor channel (TC 1.A.69) family. Or63a subfamily. In terms of assembly, interacts with Orco. Complexes exist early in the endomembrane system in olfactory sensory neurons (OSNs), coupling these complexes to the conserved ciliary trafficking pathway.

It localises to the cell membrane. Functionally, odorant receptor which mediates acceptance or avoidance behavior, depending on its substrates. The odorant receptor repertoire encodes a large collection of odor stimuli that vary widely in identity, intensity, and duration. May form a complex with Orco to form odorant-sensing units, providing sensitive and prolonged odorant signaling and calcium permeability. Involved in the behavioral responses to butyl acetate, isoamyl acetate, and hexanoic acid. This Drosophila melanogaster (Fruit fly) protein is Odorant receptor 63a (Or63a).